Here is a 316-residue protein sequence, read N- to C-terminus: Methionyl-tRNA formyltransferase (316 aa).

Residue 112–115 (SLLP) coordinates (6S)-5,6,7,8-tetrahydrofolate.

The protein belongs to the Fmt family.

The catalysed reaction is L-methionyl-tRNA(fMet) + (6R)-10-formyltetrahydrofolate = N-formyl-L-methionyl-tRNA(fMet) + (6S)-5,6,7,8-tetrahydrofolate + H(+). Attaches a formyl group to the free amino group of methionyl-tRNA(fMet). The formyl group appears to play a dual role in the initiator identity of N-formylmethionyl-tRNA by promoting its recognition by IF2 and preventing the misappropriation of this tRNA by the elongation apparatus. The protein is Methionyl-tRNA formyltransferase of Trichlorobacter lovleyi (strain ATCC BAA-1151 / DSM 17278 / SZ) (Geobacter lovleyi).